A 129-amino-acid polypeptide reads, in one-letter code: Protein Turandot A (129 aa).

An N-terminal signal peptide occupies residues 1–21; sequence MNSLTGFMCCALLLISPLCMG. Residue N49 is glycosylated (N-linked (GlcNAc...) asparagine).

The protein belongs to the Turandot family.

It localises to the secreted. A humoral factor that plays a role in stress tolerance; gives increased resistance to the lethal effects of bacterial challenge and stress. Regulated by the JAK/STAT pathway and NF-KB-like Relish pathway in the fat body, upd3 in the hemocytes and Mekk1 in response to septic injury and consequent immune response. This chain is Protein Turandot A (TotA), found in Drosophila yakuba (Fruit fly).